The chain runs to 291 residues: ATP synthase gamma chain (291 aa).

The protein belongs to the ATPase gamma chain family. F-type ATPases have 2 components, CF(1) - the catalytic core - and CF(0) - the membrane proton channel. CF(1) has five subunits: alpha(3), beta(3), gamma(1), delta(1), epsilon(1). CF(0) has three main subunits: a, b and c.

It localises to the cell inner membrane. Its function is as follows. Produces ATP from ADP in the presence of a proton gradient across the membrane. The gamma chain is believed to be important in regulating ATPase activity and the flow of protons through the CF(0) complex. This Nitratidesulfovibrio vulgaris (strain ATCC 29579 / DSM 644 / CCUG 34227 / NCIMB 8303 / VKM B-1760 / Hildenborough) (Desulfovibrio vulgaris) protein is ATP synthase gamma chain.